A 394-amino-acid polypeptide reads, in one-letter code: MLSENTINIVKSTAPLLAETGPKLTAHFYQRMFEHNPELKDIFNMSNQRNGDQREALFNAICAYASNIDNLPALLGAVEKIAHKHSSFLITADQYQIVGSHLLATIDELFSPGQAVLDAWAEAYGVLANVFIQREEQIYQANQSQTGGWRGLREFELVEKQYESAHICSFVFKPVDGGSVVSFKPGQYLGIYINDEQFENQEIRQYSLSSSVRPDCYRISVKREEGGRVSNYLHDHLDVGSKVKLAAPAGDFFLDAAPTAPVVLISAGVGLTPTLSMLESLTEHQAPVTWIHATENGQQHAFKQHVKQLVETHPHFNSLVWYNQPNSDDKIGDDFQFSGWVNLHEIETVLKQADVQVYFCGPVGFMQFIAKQLLEMGVPEQQFHYECFGPHKVV.

The Globin domain occupies 1 to 136 (MLSENTINIV…LANVFIQREE (136 aa)). Residue His-85 coordinates heme b. Active-site charge relay system residues include Tyr-95 and Glu-135. Residues 147–394 (GGWRGLREFE…YECFGPHKVV (248 aa)) are reductase. Positions 150–255 (RGLREFELVE…AAPAGDFFLD (106 aa)) constitute an FAD-binding FR-type domain. Residues Tyr-188 and 204 to 207 (RQYS) contribute to the FAD site. Residue 268-273 (GVGLTP) participates in NADP(+) binding. 387–390 (CFGP) lines the FAD pocket.

The protein belongs to the globin family. Two-domain flavohemoproteins subfamily. It in the C-terminal section; belongs to the flavoprotein pyridine nucleotide cytochrome reductase family. It depends on heme b as a cofactor. Requires FAD as cofactor.

It catalyses the reaction 2 nitric oxide + NADPH + 2 O2 = 2 nitrate + NADP(+) + H(+). The enzyme catalyses 2 nitric oxide + NADH + 2 O2 = 2 nitrate + NAD(+) + H(+). Its function is as follows. Is involved in NO detoxification in an aerobic process, termed nitric oxide dioxygenase (NOD) reaction that utilizes O(2) and NAD(P)H to convert NO to nitrate, which protects the bacterium from various noxious nitrogen compounds. Therefore, plays a central role in the inducible response to nitrosative stress. This Vibrio vulnificus (strain YJ016) protein is Flavohemoprotein.